A 460-amino-acid chain; its full sequence is NADH-ubiquinone oxidoreductase chain 4 (460 aa).

The next 13 helical transmembrane spans lie at W22–L42, P61–S81, Y97–A114, I118–N140, T149–L169, I196–L216, P226–M246, L259–M279, S286–I305, W309–L331, M352–P372, I395–M415, and L437–W457.

It belongs to the complex I subunit 4 family.

The protein localises to the mitochondrion membrane. It carries out the reaction a ubiquinone + NADH + 5 H(+)(in) = a ubiquinol + NAD(+) + 4 H(+)(out). Its function is as follows. Core subunit of the mitochondrial membrane respiratory chain NADH dehydrogenase (Complex I) that is believed to belong to the minimal assembly required for catalysis. Complex I functions in the transfer of electrons from NADH to the respiratory chain. The immediate electron acceptor for the enzyme is believed to be ubiquinone. The chain is NADH-ubiquinone oxidoreductase chain 4 (MT-ND4) from Tetraodon nigroviridis (Spotted green pufferfish).